Consider the following 406-residue polypeptide: Cysteine desulfurase (406 aa).

At Lys226 the chain carries N6-(pyridoxal phosphate)lysine. The active-site Cysteine persulfide intermediate is Cys364.

It belongs to the class-V pyridoxal-phosphate-dependent aminotransferase family. Csd subfamily. As to quaternary structure, homodimer. Interacts with SufE and the SufBCD complex composed of SufB, SufC and SufD. The interaction with SufE is required to mediate the direct transfer of the sulfur atom from the S-sulfanylcysteine. Pyridoxal 5'-phosphate serves as cofactor.

It localises to the cytoplasm. It carries out the reaction (sulfur carrier)-H + L-cysteine = (sulfur carrier)-SH + L-alanine. The enzyme catalyses L-selenocysteine + AH2 = hydrogenselenide + L-alanine + A + H(+). The protein operates within cofactor biosynthesis; iron-sulfur cluster biosynthesis. Functionally, cysteine desulfurases mobilize the sulfur from L-cysteine to yield L-alanine, an essential step in sulfur metabolism for biosynthesis of a variety of sulfur-containing biomolecules. Component of the suf operon, which is activated and required under specific conditions such as oxidative stress and iron limitation. Acts as a potent selenocysteine lyase in vitro, that mobilizes selenium from L-selenocysteine. Selenocysteine lyase activity is however unsure in vivo. The polypeptide is Cysteine desulfurase (Escherichia coli (strain K12 / MC4100 / BW2952)).